The following is a 329-amino-acid chain: DNA-directed RNA polymerase subunit alpha (329 aa).

Residues 1-235 form an alpha N-terminal domain (alpha-NTD) region; it reads MQNSIIGFLK…EQLEAFVDLR (235 aa). The alpha C-terminal domain (alpha-CTD) stretch occupies residues 249–329; that stretch reads FEPILLRPVD…KWPPSSILEE (81 aa).

This sequence belongs to the RNA polymerase alpha chain family. In terms of assembly, homodimer. The RNAP catalytic core consists of 2 alpha, 1 beta, 1 beta' and 1 omega subunit. When a sigma factor is associated with the core the holoenzyme is formed, which can initiate transcription.

The catalysed reaction is RNA(n) + a ribonucleoside 5'-triphosphate = RNA(n+1) + diphosphate. DNA-dependent RNA polymerase catalyzes the transcription of DNA into RNA using the four ribonucleoside triphosphates as substrates. The protein is DNA-directed RNA polymerase subunit alpha of Buchnera aphidicola subsp. Schizaphis graminum (strain Sg).